Consider the following 120-residue polypeptide: Membrane-anchored ubiquitin-fold protein 4 (120 aa).

The 67-residue stretch at 7-73 (VELKFRLYDG…LENGKTVAQC (67 aa)) folds into the Ubiquitin-like domain. C115 is lipidated: S-palmitoyl cysteine. A Cysteine methyl ester modification is found at C117. A lipid anchor (S-farnesyl cysteine) is attached at C117. Residues 118 to 120 (TIM) constitute a propeptide, removed in mature form.

As to expression, ubiquitous.

The protein localises to the cell membrane. In terms of biological role, may serve as docking site to facilitate the association of other proteins to the plasma membrane. The polypeptide is Membrane-anchored ubiquitin-fold protein 4 (MUB4) (Arabidopsis thaliana (Mouse-ear cress)).